Here is a 496-residue protein sequence, read N- to C-terminus: Beta-amylase (496 aa).

Substrate contacts are provided by aspartate 54, histidine 94, and aspartate 102. Residue glutamate 187 is the Proton donor of the active site. Positions 296, 301, and 343 each coordinate substrate. Glutamate 381 serves as the catalytic Proton acceptor. Residues 382-383 and arginine 421 contribute to the substrate site; that span reads NA.

The protein belongs to the glycosyl hydrolase 14 family.

The enzyme catalyses Hydrolysis of (1-&gt;4)-alpha-D-glucosidic linkages in polysaccharides so as to remove successive maltose units from the non-reducing ends of the chains.. This Trifolium repens (Creeping white clover) protein is Beta-amylase (BMY1).